The sequence spans 314 residues: NADH-ubiquinone oxidoreductase chain 1 (314 aa).

A run of 8 helical transmembrane segments spans residues 5 to 25 (IMPLIGSLLLVICVMVGVAFL), 78 to 98 (FSPVFSLFLSLLIWMCIPYLI), 105 to 125 (LGVLFFLCCTSLGVYTVMIAG), 152 to 172 (ALILLSFIFLVGNYNFLSFYF), 176 to 196 (YVWFIFFCFPLGLVWLASCLA), 227 to 247 (LIFLAEYSSILFMSMLFVVIF), 251 to 271 (DIYSFMFFLKLSFISFIFIWV), and 294 to 314 (LSLNYLFFFVGLKIFFISLLF).

The protein belongs to the complex I subunit 1 family.

The protein localises to the mitochondrion inner membrane. The enzyme catalyses a ubiquinone + NADH + 5 H(+)(in) = a ubiquinol + NAD(+) + 4 H(+)(out). Core subunit of the mitochondrial membrane respiratory chain NADH dehydrogenase (Complex I) that is believed to belong to the minimal assembly required for catalysis. Complex I functions in the transfer of electrons from NADH to the respiratory chain. The immediate electron acceptor for the enzyme is believed to be ubiquinone. The chain is NADH-ubiquinone oxidoreductase chain 1 (mt:ND1) from Anopheles gambiae (African malaria mosquito).